Consider the following 605-residue polypeptide: Xylan O-acetyltransferase 7 (605 aa).

Over 1–124 the chain is Cytoplasmic; it reads MKKKKNGMGA…AKQPSPRRTP (124 aa). Positions 86-126 are disordered; it reads PCHLLPIQGQGQMQMQQRRKPPPAAAPVAAKQPSPRRTPGP. Residues 125 to 145 traverse the membrane as a helical; Signal-anchor for type II membrane protein segment; the sequence is GPLSFAGALLSLLVVATFLYI. Residues 146 to 605 lie on the Lumenal side of the membrane; it reads NDHGNMMPPH…LYAHIVAHAA (460 aa). 2 N-linked (GlcNAc...) asparagine glycosylation sites follow: asparagine 192 and asparagine 218. Intrachain disulfides connect cysteine 243/cysteine 296, cysteine 267/cysteine 332, cysteine 276/cysteine 584, and cysteine 499/cysteine 580. The GDS motif motif lies at 319-321; that stretch reads GDS. Serine 321 serves as the catalytic Nucleophile. N-linked (GlcNAc...) asparagine glycosylation is found at asparagine 351, asparagine 363, asparagine 471, and asparagine 508. Aspartate 579 functions as the Proton donor in the catalytic mechanism. A DXXH motif motif is present at residues 579 to 582; the sequence is DCIH. The active-site Proton acceptor is the histidine 582.

Belongs to the PC-esterase family. TBL subfamily. As to expression, expressed in roots, leaves and stems.

It localises to the golgi apparatus membrane. In terms of biological role, xylan acetyltransferase required for 2-O- and 3-O-monoacetylation of xylosyl residues in xylan. Catalyzes the 2-O-acetylation of xylan, followed by nonenzymatic acetyl migration to the O-3 position, resulting in products that are monoacetylated at both O-2 and O-3 positions. The protein is Xylan O-acetyltransferase 7 of Oryza sativa subsp. japonica (Rice).